The following is a 495-amino-acid chain: Probable aminotransferase ACS12 (495 aa).

Position 334 is an N6-(pyridoxal phosphate)lysine (Lys334).

Belongs to the class-I pyridoxal-phosphate-dependent aminotransferase family. In terms of assembly, homodimer. Pyridoxal 5'-phosphate serves as cofactor. Expressed in roots. Expressed at low level in leaves, stems, flowers and siliques.

Its function is as follows. Probable aminotransferase. Does not have 1-aminocyclopropane-1-carboxylate synthase (ACS) activity, suggesting that it is not involved in ethylene biosynthesis. This Arabidopsis thaliana (Mouse-ear cress) protein is Probable aminotransferase ACS12 (ACS12).